Reading from the N-terminus, the 82-residue chain is Small ribosomal subunit protein eS27B (82 aa).

A C4-type zinc finger spans residues 37-59 (CPGCLNITTVFSHAQTAVTCESC).

This sequence belongs to the eukaryotic ribosomal protein eS27 family. In terms of assembly, component of the small ribosomal subunit (SSU). Mature yeast ribosomes consist of a small (40S) and a large (60S) subunit. The 40S small subunit contains 1 molecule of ribosomal RNA (18S rRNA) and 33 different proteins (encoded by 57 genes). The large 60S subunit contains 3 rRNA molecules (25S, 5.8S and 5S rRNA) and 46 different proteins (encoded by 81 genes). Requires Zn(2+) as cofactor. In terms of processing, the N-terminus is not modified.

Its subcellular location is the cytoplasm. In terms of biological role, component of the ribosome, a large ribonucleoprotein complex responsible for the synthesis of proteins in the cell. The small ribosomal subunit (SSU) binds messenger RNAs (mRNAs) and translates the encoded message by selecting cognate aminoacyl-transfer RNA (tRNA) molecules. The large subunit (LSU) contains the ribosomal catalytic site termed the peptidyl transferase center (PTC), which catalyzes the formation of peptide bonds, thereby polymerizing the amino acids delivered by tRNAs into a polypeptide chain. The nascent polypeptides leave the ribosome through a tunnel in the LSU and interact with protein factors that function in enzymatic processing, targeting, and the membrane insertion of nascent chains at the exit of the ribosomal tunnel. This Saccharomyces cerevisiae (strain ATCC 204508 / S288c) (Baker's yeast) protein is Small ribosomal subunit protein eS27B.